Reading from the N-terminus, the 272-residue chain is Orotidine 5'-phosphate decarboxylase (272 aa).

Lysine 93 (proton donor) is an active-site residue.

This sequence belongs to the OMP decarboxylase family. Type 2 subfamily.

The catalysed reaction is orotidine 5'-phosphate + H(+) = UMP + CO2. The protein operates within pyrimidine metabolism; UMP biosynthesis via de novo pathway; UMP from orotate: step 2/2. The polypeptide is Orotidine 5'-phosphate decarboxylase (Roseiflexus castenholzii (strain DSM 13941 / HLO8)).